The sequence spans 286 residues: Probable aquaporin-3 (286 aa).

The disordered stretch occupies residues 1 to 34 (MADTYGMNGHNGHVKDRRSSSMNGRNRLYAQQEP). Topologically, residues 1–52 (MADTYGMNGHNGHVKDRRSSSMNGRNRLYAQQEPQRTTHLSEFGKHMVAASG) are cytoplasmic. Residues 53 to 73 (EFVGTFLFLYFGYAGNIVAVL) traverse the membrane as a helical segment. Residues 74–87 (QEPISGPNGTLANN) lie on the Extracellular side of the membrane. Residues Asn-81 and Asn-86 are each glycosylated (N-linked (GlcNAc...) asparagine). Residues 88–108 (TVMYIAMAYGFSLLVNVWTFY) traverse the membrane as a helical segment. Topologically, residues 109–135 (RISGGLFNPAVTFGLCLSGQLPWIRAL) are cytoplasmic. Positions 116-118 (NPA) match the NPA 1 motif. The chain crosses the membrane as a helical span at residues 136–156 (FLFPSQIIAAMCAGGLVNAMF). At 157 to 175 (PGSASIANTTLGPNTSIAQ) the chain is on the extracellular side. N-linked (GlcNAc...) asparagine glycosylation is found at Asn-164 and Asn-170. A helical membrane pass occupies residues 176–196 (GVFLEMFFTAQLVFVVLMLAA). The Cytoplasmic portion of the chain corresponds to 197–202 (EKSRDT). The chain crosses the membrane as a helical span at residues 203–223 (FLAPVGIGLALFVALIPGVFV). The Extracellular segment spans residues 224–244 (TGGSANPVRSFGCAVGSRDFP). The short motif at 229-231 (NPV) is the NPA 2 element. A helical transmembrane segment spans residues 245 to 265 (GYHWIYWVGPLLGAALAAGYF). The Cytoplasmic segment spans residues 266–286 (RLVKMMHYEEANPGQDSPVDV).

The protein belongs to the MIP/aquaporin (TC 1.A.8) family.

The protein localises to the membrane. The catalysed reaction is H2O(in) = H2O(out). In terms of biological role, probable water channel that may have redundant functions with FgAQP5. The chain is Probable aquaporin-3 from Gibberella zeae (strain ATCC MYA-4620 / CBS 123657 / FGSC 9075 / NRRL 31084 / PH-1) (Wheat head blight fungus).